A 353-amino-acid polypeptide reads, in one-letter code: UPF0283 membrane protein YcjF (353 aa).

Residues 1–19 show a composition bias toward basic and acidic residues; sequence MSEPLKPRIDFAEPLKEEP. The disordered stretch occupies residues 1–35; sequence MSEPLKPRIDFAEPLKEEPTSAFKAQQTFSEAESR. 3 helical membrane-spanning segments follow: residues 70–90, 100–120, and 213–233; these read MVMGGLALFGASVVGQGVQWT, VALGGCAAGALIVGAGVGSVV, and ESTLMIAVSPLALVDMAFIAW.

It belongs to the UPF0283 family.

The protein localises to the cell inner membrane. This is UPF0283 membrane protein YcjF from Salmonella paratyphi A (strain AKU_12601).